A 189-amino-acid chain; its full sequence is Probable thymidylate kinase 1 (189 aa).

Position 9 to 16 (9 to 16 (GIDGSGKT)) interacts with ATP.

This sequence belongs to the thymidylate kinase family.

The catalysed reaction is dTMP + ATP = dTDP + ADP. This chain is Probable thymidylate kinase 1 (tmk1), found in Saccharolobus solfataricus (strain ATCC 35092 / DSM 1617 / JCM 11322 / P2) (Sulfolobus solfataricus).